The sequence spans 147 residues: Peptide methionine sulfoxide reductase MsrA (147 aa).

C10 is a catalytic residue.

Belongs to the MsrA Met sulfoxide reductase family.

The enzyme catalyses L-methionyl-[protein] + [thioredoxin]-disulfide + H2O = L-methionyl-(S)-S-oxide-[protein] + [thioredoxin]-dithiol. It carries out the reaction [thioredoxin]-disulfide + L-methionine + H2O = L-methionine (S)-S-oxide + [thioredoxin]-dithiol. Functionally, has an important function as a repair enzyme for proteins that have been inactivated by oxidation. Catalyzes the reversible oxidation-reduction of methionine sulfoxide in proteins to methionine. This Pelagibacter ubique (strain HTCC1062) protein is Peptide methionine sulfoxide reductase MsrA.